Consider the following 445-residue polypeptide: Histamine H3 receptor (445 aa).

Residues 1-40 (MERAPPDGLMNASGALAGEAAAAAGGARTFSAAWTAVLAA) are Extracellular-facing. The N-linked (GlcNAc...) asparagine glycan is linked to N11. A helical transmembrane segment spans residues 41 to 61 (LMALLIVATVLGNALVMLAFV). The Cytoplasmic segment spans residues 62 to 71 (ADSSLRTQNN). A helical transmembrane segment spans residues 72–92 (FFLLNLAISDFLVGVFCIPLY). Topologically, residues 93-109 (VPYVLTGRWTFGRGLCK) are extracellular. Residues C108 and C189 are joined by a disulfide bond. The chain crosses the membrane as a helical span at residues 110–130 (LWLVVDYLLCTSSVFNIVLIS). The Cytoplasmic segment spans residues 131–157 (YDRFLSVTRAVSYRAQQGDTRRAVRKM). A helical transmembrane segment spans residues 158-178 (VLVWVLAFLLYGPAILSWEYL). The Extracellular segment spans residues 179–197 (SGGSSIPEGHCYAEFFYNW). A helical membrane pass occupies residues 198-218 (YFLITASTLEFFTPFLSVTFF). Residues 219–359 (NLSIYLNIQR…LSRDKKVAKS (141 aa)) are Cytoplasmic-facing. Disordered stretches follow at residues 236 to 264 (GGAREAGPDPLPEAQSSPPQPPPGCWGCW) and 288 to 336 (AGEA…LEKR). Positions 299–312 (AAASPTSSSGSSSR) are enriched in low complexity. A helical membrane pass occupies residues 360–380 (LAIIVSIFGLCWAPYTLLMII). At 381–398 (RAACHGHCVPDYWYETSF) the chain is on the extracellular side. Residues 399-419 (WLLWANSAVNPVLYPLCHYSF) traverse the membrane as a helical segment. The Cytoplasmic segment spans residues 420 to 445 (RRAFTKLLCPQKLKVQPHSSLEHCWK). Position 439 is a phosphoserine (S439).

Belongs to the G-protein coupled receptor 1 family. In terms of tissue distribution, expressed widely and abundantly throughout the brain. Highly expressed in discrete neuronal populations such as pyramidal cells in cerebral cortex or cerebellar Purkinje cells.

The protein localises to the cell membrane. Its function is as follows. The H3 subclass of histamine receptors could mediate the histamine signals in CNS and peripheral nervous system. Signals through the inhibition of adenylate cyclase and displays high constitutive activity (spontaneous activity in the absence of agonist). The polypeptide is Histamine H3 receptor (HRH3) (Cavia porcellus (Guinea pig)).